We begin with the raw amino-acid sequence, 677 residues long: NADPH--cytochrome P450 reductase (677 aa).

N-acetylglycine is present on Gly2. Residues 2–21 are Lumenal-facing; it reads GDSHVDTSSTVSEAVAEEVS. Residues 22-42 form a helical membrane-spanning segment; sequence LFSMTDMILFSLIVGLLTYWF. Residues 43–677 lie on the Cytoplasmic side of the membrane; it reads LFRKKKEEVP…KGRYSLDVWS (635 aa). Position 63 is a phosphoserine (Ser63). A Flavodoxin-like domain is found at 80–224; it reads IIVFYGSQTG…DFITWREQFW (145 aa). Residues 86–91, 138–141, 173–182, and Asp208 each bind FMN; these read SQTGTA, ATYG, and LGNKTYEHFN. One can recognise an FAD-binding FR-type domain in the interval 279 to 521; the sequence is KNPFLAAVTT…FVRKSQFRLP (243 aa). Arg298 is a binding site for NADP(+). Residues Arg424, 454–457, 472–474, Tyr478, and 488–491 each bind FAD; these read RYYS, CAV, and GVAT. Residues Thr535, 596-597, 602-606, and Asp638 each bind NADP(+); these read SR and KVYVQ. Residue Trp676 participates in FAD binding.

This sequence belongs to the NADPH--cytochrome P450 reductase family. The protein in the N-terminal section; belongs to the flavodoxin family. In the C-terminal section; belongs to the flavoprotein pyridine nucleotide cytochrome reductase family. The cofactor is FAD. FMN serves as cofactor.

The protein resides in the endoplasmic reticulum membrane. The catalysed reaction is 2 oxidized [cytochrome P450] + NADPH = 2 reduced [cytochrome P450] + NADP(+) + H(+). This enzyme is required for electron transfer from NADP to cytochrome P450 in microsomes. It can also provide electron transfer to heme oxygenase and cytochrome B5. This is NADPH--cytochrome P450 reductase from Homo sapiens (Human).